Here is a 55-residue protein sequence, read N- to C-terminus: ATP synthase F(0) complex subunit 8 (55 aa).

A helical membrane pass occupies residues 7 to 29 (NPWFYIMLMSWLTFSLIIQPELL).

It belongs to the ATPase protein 8 family. Component of the ATP synthase complex composed at least of ATP5F1A/subunit alpha, ATP5F1B/subunit beta, ATP5MC1/subunit c (homooctomer), MT-ATP6/subunit a, MT-ATP8/subunit 8, ATP5ME/subunit e, ATP5MF/subunit f, ATP5MG/subunit g, ATP5MK/subunit k, ATP5MJ/subunit j, ATP5F1C/subunit gamma, ATP5F1D/subunit delta, ATP5F1E/subunit epsilon, ATP5PF/subunit F6, ATP5PB/subunit b, ATP5PD/subunit d, ATP5PO/subunit OSCP. ATP synthase complex consists of a soluble F(1) head domain (subunits alpha(3) and beta(3)) - the catalytic core - and a membrane F(0) domain - the membrane proton channel (subunits c, a, 8, e, f, g, k and j). These two domains are linked by a central stalk (subunits gamma, delta, and epsilon) rotating inside the F1 region and a stationary peripheral stalk (subunits F6, b, d, and OSCP).

The protein resides in the mitochondrion membrane. Subunit 8, of the mitochondrial membrane ATP synthase complex (F(1)F(0) ATP synthase or Complex V) that produces ATP from ADP in the presence of a proton gradient across the membrane which is generated by electron transport complexes of the respiratory chain. ATP synthase complex consist of a soluble F(1) head domain - the catalytic core - and a membrane F(1) domain - the membrane proton channel. These two domains are linked by a central stalk rotating inside the F(1) region and a stationary peripheral stalk. During catalysis, ATP synthesis in the catalytic domain of F(1) is coupled via a rotary mechanism of the central stalk subunits to proton translocation. In vivo, can only synthesize ATP although its ATP hydrolase activity can be activated artificially in vitro. Part of the complex F(0) domain. This Musophaga violacea (Violet turaco) protein is ATP synthase F(0) complex subunit 8.